We begin with the raw amino-acid sequence, 414 residues long: Phospholipid-transporting ATPase accessory subunit LEM3 (414 aa).

The tract at residues 1–50 (MVNFDLGQVGEVFRRKDKGAIVSGDNPEEEEDVDASEFEEDEVKPVRTKN) is required for localization to the plasma membrane. Topologically, residues 1–74 (MVNFDLGQVG…AINPVLTPRT (74 aa)) are cytoplasmic. A disordered region spans residues 20 to 52 (AIVSGDNPEEEEDVDASEFEEDEVKPVRTKNRR). Residues 26–42 (NPEEEEDVDASEFEEDE) show a composition bias toward acidic residues. Residue Ser-36 is modified to Phosphoserine. Residues 75–95 (VLPLYLLIAVVFVIVGGCILA) traverse the membrane as a helical segment. Residues 96–372 (QNSKVDEVTI…HGSHLGGRNP (277 aa)) lie on the Extracellular side of the membrane. Disulfide bonds link Cys-110/Cys-159 and Cys-216/Cys-231. N-linked (GlcNAc...) asparagine glycosylation is present at Asn-113. 5 N-linked (GlcNAc...) asparagine glycosylation sites follow: Asn-240, Asn-256, Asn-279, Asn-298, and Asn-332. The helical transmembrane segment at 373–393 (FLGIVYLIGGCICAAMALILL) threads the bilayer. The Cytoplasmic segment spans residues 394 to 414 (TFWLFGGRKIADASSLSWNMK). Positions 400–414 (GRKIADASSLSWNMK) are required for localization to the plasma membrane.

It belongs to the CDC50/LEM3 family. In terms of assembly, component of a flippase complex consisting of DNF1 or DNF2 and LEM3. Interacts with DNF1; the interaction is direct and required for their mutual export from the endoplasmic reticulum. Interacts with DNF2; the interaction is direct and required for their mutual export from the endoplasmic reticulum.

The protein resides in the cell membrane. Its function is as follows. Accessory component of a P4-ATPase flippase complex which catalyzes the hydrolysis of ATP coupled to the transport of glucosylceramide, phosphatidylcholine, phosphatidylethanolamine, and small amounts of phosphatidylserine from the lumenal to the cytosolic leaflet of the cell membrane and ensures the maintenance of asymmetric distribution of phospholipids. Contributes to substrate binding and specificity of the P4-ATPase catalytic subunit. This chain is Phospholipid-transporting ATPase accessory subunit LEM3, found in Saccharomyces cerevisiae (strain ATCC 204508 / S288c) (Baker's yeast).